Here is a 312-residue protein sequence, read N- to C-terminus: Glycerol-3-phosphate dehydrogenase [NAD(P)+] (312 aa).

Positions 11, 30, 31, and 95 each coordinate NADPH. Positions 95, 123, and 125 each coordinate sn-glycerol 3-phosphate. NADPH is bound at residue alanine 127. Positions 177, 230, 240, 241, and 242 each coordinate sn-glycerol 3-phosphate. Residue lysine 177 is the Proton acceptor of the active site. Arginine 241 provides a ligand contact to NADPH. Residues valine 265 and glutamate 267 each contribute to the NADPH site.

Belongs to the NAD-dependent glycerol-3-phosphate dehydrogenase family.

Its subcellular location is the cytoplasm. It catalyses the reaction sn-glycerol 3-phosphate + NAD(+) = dihydroxyacetone phosphate + NADH + H(+). The catalysed reaction is sn-glycerol 3-phosphate + NADP(+) = dihydroxyacetone phosphate + NADPH + H(+). It participates in membrane lipid metabolism; glycerophospholipid metabolism. Functionally, catalyzes the reduction of the glycolytic intermediate dihydroxyacetone phosphate (DHAP) to sn-glycerol 3-phosphate (G3P), the key precursor for phospholipid synthesis. This is Glycerol-3-phosphate dehydrogenase [NAD(P)+] from Helicobacter pylori (strain HPAG1).